Here is a 330-residue protein sequence, read N- to C-terminus: MWATKSRRCAVHTSSMASGDVLPRFFTVFLSHCSSESMVIPRSYYNLLPRPLPKTAILIGTGGRFWKVAMTSKQEQVYFEQGWGNFVADNQLKEGEFLTFVFDGHKSYEVSIYGRGDCKETRAVIQVEEISDDTEDDNVSLHSPSNVSLDSLSNDSHHSTSNVSLRSLSNDSLHGDAEIESDSEYSPENLPSASISVESVEVVNPTTSRQRSYKRKTIENPHLYLDDPNNVCFETCLKLRKFELLVHAQLVKDYGLIFSDNVDYIDGYGKLTAKTTKWADQRVCINKWQKICERNQFTENDSILCEILRNEDKVVYAIKIHIFRDAAAST.

The segment at residues 23 to 116 (PRFFTVFLSH…SYEVSIYGRG (94 aa)) is a DNA-binding region (TF-B3). The segment covering 129 to 138 (EISDDTEDDN) has biased composition (acidic residues). The segment at 129-169 (EISDDTEDDNVSLHSPSNVSLDSLSNDSHHSTSNVSLRSLS) is disordered. Residues 142–162 (HSPSNVSLDSLSNDSHHSTSN) are compositionally biased toward low complexity.

The protein localises to the nucleus. The polypeptide is B3 domain-containing protein REM21 (REM21) (Arabidopsis thaliana (Mouse-ear cress)).